The chain runs to 151 residues: UPF0208 membrane protein Spro_3315 (151 aa).

2 helical membrane passes run 46–64 and 70–90; these read FAVR…WQIA and GPAI…LWWL.

This sequence belongs to the UPF0208 family.

The protein resides in the cell inner membrane. This Serratia proteamaculans (strain 568) protein is UPF0208 membrane protein Spro_3315.